Reading from the N-terminus, the 284-residue chain is Acetylglutamate kinase (284 aa).

Substrate contacts are provided by residues 64 to 65 (GG), R86, and N179.

The protein belongs to the acetylglutamate kinase family. ArgB subfamily.

The protein localises to the cytoplasm. The catalysed reaction is N-acetyl-L-glutamate + ATP = N-acetyl-L-glutamyl 5-phosphate + ADP. Its pathway is amino-acid biosynthesis; L-arginine biosynthesis; N(2)-acetyl-L-ornithine from L-glutamate: step 2/4. Catalyzes the ATP-dependent phosphorylation of N-acetyl-L-glutamate. This is Acetylglutamate kinase from Prochlorococcus marinus subsp. pastoris (strain CCMP1986 / NIES-2087 / MED4).